The chain runs to 467 residues: Tel2-interacting protein 2 (467 aa).

Positions 4–45 (YKELARRLHTLQSKNEKEALEKQIDFLDKLVVEVDSLVHEQD) form a coiled coil.

This sequence belongs to the TTI2 family. Component of the TTT complex composed of tel2, tti1 and tti2. Interacts with tel2 and ttiI1. Component of the ASTRA complex composed of at least rvb1, rvb2, tra1, tel2, tti1 and tti2.

The protein resides in the nucleus. Its function is as follows. Component of the tel2-tti1-tti2 (TTT) complex that stabilizes protein levels of the phosphatidylinositol 3-kinase-related protein kinase (PIKK) family proteins. The TTT complex is involved in the cellular resistance to DNA damage stresses, like ionizing radiation (IR), ultraviolet (UV) and mitomycin C (MMC). Component of the ASTRA complex involved in chromatin remodeling. The protein is Tel2-interacting protein 2 of Schizosaccharomyces pombe (strain 972 / ATCC 24843) (Fission yeast).